The sequence spans 114 residues: MKVIAAFLLALLGGNTSPTDEDLKSILASVGADADDDKIELLLSQVKGKDITELIASGRERLASVPSGGGVAVAAAAGGGGGDAPAAAAEEPKKEEKSEEESDEELGFSLFDDN.

Positions 74-83 (AAAAGGGGGD) are enriched in gly residues. A disordered region spans residues 74–114 (AAAAGGGGGDAPAAAAEEPKKEEKSEEESDEELGFSLFDDN). Over residues 98 to 114 (SEEESDEELGFSLFDDN) the composition is skewed to acidic residues.

The protein belongs to the eukaryotic ribosomal protein P1/P2 family. P1 and P2 exist as dimers at the large ribosomal subunit. Phosphorylated.

Its function is as follows. Plays an important role in the elongation step of protein synthesis. This is Large ribosomal subunit protein P2 from Parthenium argentatum (Guayule rubber plant).